The sequence spans 585 residues: Putative sulfur deprivation response regulator (585 aa).

Transmembrane regions (helical) follow at residues 5 to 25 (VVDA…RGII), 30 to 50 (AFAG…MIAA), 83 to 103 (VASV…IPVV), 117 to 137 (FMMP…IGTS), and 162 to 182 (IIGL…SPLL). RCK C-terminal domains follow at residues 189-274 (MMAA…LPGL) and 288-372 (ETVA…STEW). 5 consecutive transmembrane segments (helical) span residues 389 to 409 (LALF…SMDV), 411 to 431 (PLST…VLTV), 442 to 462 (ILLT…TGLA), 482 to 502 (VAAI…GAAV), and 561 to 581 (FGLP…VLYF).

The protein belongs to the CitM (TC 2.A.11) transporter family.

It localises to the membrane. Its function is as follows. Not known; mutations in SAC1 produces cells that cannot synthesize arylsulfatase and cannot take up sulfate as rapidly as wild-type cells. SAC1 is necessary for cells to survive sulfur deprivation. In Chlamydomonas reinhardtii (Chlamydomonas smithii), this protein is Putative sulfur deprivation response regulator (SAC1).